Reading from the N-terminus, the 67-residue chain is Ranatuerin-2Vb (67 aa).

Residues 1–22 form the signal peptide; the sequence is MFTLKKSFLLLFFLGTITLSLC. A propeptide spanning residues 23 to 39 is cleaved from the precursor; the sequence is EEERGADDDDGEEEVKR. A disulfide bridge links Cys-62 with Cys-67.

As to expression, expressed by the skin glands.

The protein localises to the secreted. Its function is as follows. Antimicrobial peptide. The polypeptide is Ranatuerin-2Vb (Odorrana versabilis (Chinese bamboo leaf odorous frog)).